The sequence spans 374 residues: Translocating chain-associated membrane protein 1 (374 aa).

The Cytoplasmic segment spans residues 1–29; sequence MAIRKKSSKNPPVLSHEFVLQNHADIVSC. Residues 30–50 traverse the membrane as a helical segment; it reads VAMVFLLGLMFEITAKVSIIF. Over 51 to 81 the chain is Lumenal; sequence VTLQYNVTLPATEEQATESAFLYYYGIKDLA. N-linked (GlcNAc...) asparagine glycosylation is present at asparagine 56. The chain crosses the membrane as a helical span at residues 82–102; sequence TVFFYMLVAIIIHAIIQEYVL. Over 103–121 the chain is Cytoplasmic; that stretch reads DKINRRMHFSKTKHSKFNE. The 210-residue stretch at 117–326 folds into the TLC domain; it reads SKFNESGQLS…NFQLRRWREH (210 aa). Residues 122 to 142 form a helical membrane-spanning segment; it reads SGQLSAFYLFSCIWGTFILIS. The Lumenal segment spans residues 143–159; the sequence is ENYISDPTILWRAYPHN. A helical transmembrane segment spans residues 160-180; it reads LMTFQMKFFYISQLAYWFHAF. At 181–192 the chain is on the cytoplasmic side; that stretch reads PELYFQKTKKED. The helical transmembrane segment at 193-213 threads the bilayer; that stretch reads IPRQLVYIGLYLFHIAGAYLL. Residue asparagine 214 is a topological domain, lumenal. The chain crosses the membrane as a helical span at residues 215–235; the sequence is LNHLGLVLLVLHYFVEFLFHI. The Cytoplasmic portion of the chain corresponds to 236–251; that stretch reads SRLFYFSDEKYQKGFS. The helical transmembrane segment at 252 to 272 threads the bilayer; it reads LWAVLFVLGRLLTLILSVLTV. Residues 273–297 are Lumenal-facing; sequence GFGLARAENQKLDFSTGNFNVLAVR. A helical transmembrane segment spans residues 298–318; the sequence is IAVLASICITQAFMMWKFINF. At 319 to 374 the chain is on the cytoplasmic side; that stretch reads QLRRWREHSAFQAPAVKKKPPVTKGRSSRKGTENGVNGTVTSNGADSPRNRKEKSS. A disordered region spans residues 331 to 374; that stretch reads APAVKKKPPVTKGRSSRKGTENGVNGTVTSNGADSPRNRKEKSS. The segment covering 334–347 has biased composition (basic residues); the sequence is VKKKPPVTKGRSSR. Polar residues predominate over residues 352–363; the sequence is NGVNGTVTSNGA. At serine 365 the chain carries Phosphoserine.

This sequence belongs to the TRAM family. As to quaternary structure, interacts with SEC61B. May interact with Derlin-1/DERL1. N-glycosylated.

It is found in the endoplasmic reticulum membrane. In terms of biological role, involved in the translocation of nascent protein chains into or through the endoplasmic reticulum (ER) membrane by facilitating the proper chain positioning at the SEC61 channel. Regulates the exposure of nascent secretory protein chain to the cytosol during translocation into the ER. May affect the phospholipid bilayer in the vicinity of the lateral gate of the SEC61 channel, thereby facilitating ER protein transport. Intimately associates with transmembrane (TM) domain of nascent membrane proteins during the entire integration process into the ER membrane. Associates with the second TM domain of G-protein-coupled receptor opsin/OPSD nascent chain in the ER membrane, which may facilitate its integration into the membrane. Under conditions of ER stress, participates in the disposal of misfolded ER membrane proteins during the unfolded protein response (UPR), an integrated stress response (ISR) pathway, by selectively retrotranslocating misfolded ER-membrane proteins from the ER into the cytosol where they are ubiquitinated and degraded by the proteasome. This is Translocating chain-associated membrane protein 1 (TRAM1) from Bos taurus (Bovine).